A 146-amino-acid chain; its full sequence is Large ribosomal subunit protein uL15 (146 aa).

A compositionally biased stretch (basic and acidic residues) spans 1–13 (MKLHELRPAEGSR). Residues 1–55 (MKLHELRPAEGSRKSPKRVGRGTGSGLGKTSARGENGQNSRSGGGVRPGFEGGQM) are disordered. Residues 42–52 (SGGGVRPGFEG) show a composition bias toward gly residues.

Belongs to the universal ribosomal protein uL15 family. In terms of assembly, part of the 50S ribosomal subunit.

Its function is as follows. Binds to the 23S rRNA. The polypeptide is Large ribosomal subunit protein uL15 (Clostridium tetani (strain Massachusetts / E88)).